A 1322-amino-acid polypeptide reads, in one-letter code: Phosphoribosylformylglycinamidine synthase (1322 aa).

ATP is bound by residues 300–311 and alanine 702; that span reads GASTGAGGEIRD. Mg(2+)-binding residues include aspartate 703, glutamate 742, asparagine 746, and aspartate 915. Serine 917 serves as a coordination point for ATP. The Glutamine amidotransferase type-1 domain occupies 1073–1322; it reads VAILREQGIN…LFRNARAWVG (250 aa). The active-site Nucleophile is the cysteine 1166. Catalysis depends on residues histidine 1287 and glutamate 1289.

The protein in the N-terminal section; belongs to the FGAMS family. Monomer.

It is found in the cytoplasm. The enzyme catalyses N(2)-formyl-N(1)-(5-phospho-beta-D-ribosyl)glycinamide + L-glutamine + ATP + H2O = 2-formamido-N(1)-(5-O-phospho-beta-D-ribosyl)acetamidine + L-glutamate + ADP + phosphate + H(+). The protein operates within purine metabolism; IMP biosynthesis via de novo pathway; 5-amino-1-(5-phospho-D-ribosyl)imidazole from N(2)-formyl-N(1)-(5-phospho-D-ribosyl)glycinamide: step 1/2. Functionally, phosphoribosylformylglycinamidine synthase involved in the purines biosynthetic pathway. Catalyzes the ATP-dependent conversion of formylglycinamide ribonucleotide (FGAR) and glutamine to yield formylglycinamidine ribonucleotide (FGAM) and glutamate. This chain is Phosphoribosylformylglycinamidine synthase, found in Xylella fastidiosa (strain Temecula1 / ATCC 700964).